We begin with the raw amino-acid sequence, 273 residues long: Large ribosomal subunit protein uL2cz/uL2cy (273 aa).

The segment at 224–273 (NPVDHPHGGGEGRAPIGRKKPATPWGYPALGRRSRKRNKYSDRFILRRRK) is disordered. Over residues 262–273 (KYSDRFILRRRK) the composition is skewed to basic and acidic residues.

This sequence belongs to the universal ribosomal protein uL2 family. In terms of assembly, part of the 50S ribosomal subunit.

The protein resides in the plastid. It localises to the chloroplast. The protein is Large ribosomal subunit protein uL2cz/uL2cy (rpl2-A) of Piper cenocladum (Ant piper).